Reading from the N-terminus, the 126-residue chain is Small ribosomal subunit protein uS13c (126 aa).

The interval 97-126 is disordered; it reads PLRGQRTRTNARTRRGGKKTVAGKKKAPRK. A compositionally biased stretch (basic residues) spans 101–126; that stretch reads QRTRTNARTRRGGKKTVAGKKKAPRK.

It belongs to the universal ribosomal protein uS13 family. As to quaternary structure, part of the 30S ribosomal subunit.

The protein localises to the plastid. It is found in the chloroplast. Located at the top of the head of the 30S subunit, it contacts several helices of the 16S rRNA. This Porphyra purpurea (Red seaweed) protein is Small ribosomal subunit protein uS13c.